Reading from the N-terminus, the 602-residue chain is UvrABC system protein C (602 aa).

The GIY-YIG domain occupies 15 to 92; the sequence is DLPGSYQMKD…IQKYQPYYNI (78 aa). The 36-residue stretch at 197–232 folds into the UVR domain; the sequence is GKAKASLTAKMERAAKNLQFERAAEIRDQLHYIEQT.

This sequence belongs to the UvrC family. In terms of assembly, interacts with UvrB in an incision complex.

The protein localises to the cytoplasm. In terms of biological role, the UvrABC repair system catalyzes the recognition and processing of DNA lesions. UvrC both incises the 5' and 3' sides of the lesion. The N-terminal half is responsible for the 3' incision and the C-terminal half is responsible for the 5' incision. This chain is UvrABC system protein C, found in Lacticaseibacillus casei (strain BL23) (Lactobacillus casei).